Here is a 931-residue protein sequence, read N- to C-terminus: MKIQKKLTGCSRLMLLCLSLELLLEAGAGNIHYSVPEETDKGSFVGNIAKDLGLQPQELADGGVRIVSRGRMPLFALNPRSGSLITARRIDREELCAQSMPCLVSFNILVEDKMKLFPVEVEIIDINDNTPQFQLEELEFKMNEITTPGTRVSLPFGQDLDVGMNSLQSYQLSSNPHFSLDVQQGADGPQHPEMVLQSPLDREEEAVHHLILTASDGGEPVRSGTLRIYIQVVDANDNPPAFTQAQYHINVPENVPLGTQLLMVNATDPDEGANGEVTYSFHNVDHRVAQIFRLDSYTGEISNKEPLDFEEYKMYSMEVQAQDGAGLMAKVKVLIKVLDVNDNAPEVTITSVTTAVPENFPPGTIIALISVHDQDSGDNGYTTCFIPGNLPFKLEKLVDNYYRLVTERTLDRELISGYNITITAIDQGTPALSTETHISLLVTDINDNSPVFHQDSYSAYIPENNPRGASIFSVRAHDLDSNENAQITYSLIEDTIQGAPLSAYLSINSDTGVLYALRSFDYEQFRDMQLKVMARDSGDPPLSSNVSLSLFLLDQNDNAPEILYPALPTDGSTGVELAPLSAEPGYLVTKVVAVDRDSGQNAWLSYRLLKASEPGLFSVGLHTGEVRTARALLDRDALKQSLVVAVQDHGQPPLSATVTLTVAVADRISDILADLGSLEPSAKPNDSDLTLYLVVAAAAVSCVFLAFVIVLLAHRLRRWHKSRLLQASGGGLASMPGSHFVGVDGVRAFLQTYSHEVSLTADSRKSHLIFPQPNYADTLISQESCEKKGFLSAPQSLLEDKKEPFSQQAPPNTDWRFSQAQRPGTSGSQNGDDTGTWPNNQFDTEMLQAMILASASEAADGSSTLGGGAGTMGLSARYGPQFTLQHVPDYRQNVYIPGSNATLTNAAGKRDGKAPAGGNGNKKKSGKKEKK.

The signal sequence occupies residues 1-28; it reads MKIQKKLTGCSRLMLLCLSLELLLEAGA. 6 Cadherin domains span residues 29-133, 134-242, 243-347, 348-452, 453-562, and 570-682; these read GNIH…TPQF, QLEE…PPAF, TQAQ…APEV, TITS…SPVF, HQDS…APEI, and DGST…EPSA. At 29 to 692 the chain is on the extracellular side; the sequence is GNIHYSVPEE…KPNDSDLTLY (664 aa). N-linked (GlcNAc...) asparagine glycosylation is found at Asn-265, Asn-419, and Asn-545. N-linked (GlcNAc...) asparagine glycosylation occurs at Asn-685. The chain crosses the membrane as a helical span at residues 693–713; it reads LVVAAAAVSCVFLAFVIVLLA. The Cytoplasmic segment spans residues 714-931; that stretch reads HRLRRWHKSR…KKKSGKKEKK (218 aa). 2 disordered regions span residues 801–840 and 901–931; these read KKEP…WPNN and ATLT…KEKK. Over residues 805–840 the composition is skewed to polar residues; the sequence is FSQQAPPNTDWRFSQAQRPGTSGSQNGDDTGTWPNN. A compositionally biased stretch (basic residues) spans 921 to 931; sequence NKKKSGKKEKK.

The protein resides in the cell membrane. Potential calcium-dependent cell-adhesion protein. May be involved in the establishment and maintenance of specific neuronal connections in the brain. The polypeptide is Protocadherin gamma-A1 (PCDHGA1) (Homo sapiens (Human)).